Here is a 466-residue protein sequence, read N- to C-terminus: Ribulose bisphosphate carboxylase large chain (466 aa).

Lys-5 is subject to N6,N6,N6-trimethyllysine. 2 residues coordinate substrate: Asn-114 and Thr-164. Residue Lys-166 is the Proton acceptor of the active site. A substrate-binding site is contributed by Lys-168. The Mg(2+) site is built by Lys-192, Asp-194, and Glu-195. Residue Lys-192 is modified to N6-carboxylysine. The Proton acceptor role is filled by His-285. Substrate-binding residues include Arg-286, His-318, and Ser-370.

It belongs to the RuBisCO large chain family. Type I subfamily. Heterohexadecamer of 8 large chains and 8 small chains; disulfide-linked. The disulfide link is formed within the large subunit homodimers. It depends on Mg(2+) as a cofactor. In terms of processing, the disulfide bond which can form in the large chain dimeric partners within the hexadecamer appears to be associated with oxidative stress and protein turnover.

The protein resides in the plastid. It is found in the chloroplast. It carries out the reaction 2 (2R)-3-phosphoglycerate + 2 H(+) = D-ribulose 1,5-bisphosphate + CO2 + H2O. It catalyses the reaction D-ribulose 1,5-bisphosphate + O2 = 2-phosphoglycolate + (2R)-3-phosphoglycerate + 2 H(+). Its function is as follows. RuBisCO catalyzes two reactions: the carboxylation of D-ribulose 1,5-bisphosphate, the primary event in carbon dioxide fixation, as well as the oxidative fragmentation of the pentose substrate in the photorespiration process. Both reactions occur simultaneously and in competition at the same active site. The sequence is that of Ribulose bisphosphate carboxylase large chain from Poliothyrsis sinensis (Chinese pearlbloom tree).